A 157-amino-acid chain; its full sequence is DNA gyrase inhibitor (157 aa).

The protein belongs to the DNA gyrase inhibitor family. As to quaternary structure, interacts with DNA gyrase.

It is found in the cytoplasm. In terms of biological role, inhibits the supercoiling activity of DNA gyrase. Acts by inhibiting DNA gyrase at an early step, prior to (or at the step of) binding of DNA by the gyrase. It protects cells against toxins that target DNA gyrase, by inhibiting activity of these toxins and reducing the formation of lethal double-strand breaks in the cell. This is DNA gyrase inhibitor from Yersinia enterocolitica serotype O:8 / biotype 1B (strain NCTC 13174 / 8081).